Here is a 688-residue protein sequence, read N- to C-terminus: Complement C1s subcomponent (688 aa).

The N-terminal stretch at 1-15 (MWCFVFFSLLASFSA) is a signal peptide. Residues 16–130 (EPTMYGEILS…TGFAAYYSAV (115 aa)) form the CUB 1 domain. Ca(2+) is bound by residues Glu60, Asp68, Asp113, Asp131, Val132, and Glu134. A disulfide bridge links Cys65 with Cys83. The 42-residue stretch at 131 to 172 (DVNECTDFTDVPCSHFCNNFIGGYFCSCPPEYFLHDDMRTCG) folds into the EGF-like; calcium-binding domain. Disulfide bonds link Cys135–Cys147, Cys143–Cys156, and Cys158–Cys171. Ca(2+)-binding residues include Asn149, Phe150, and Gly153. A (3R)-3-hydroxyasparagine modification is found at Asn149. Residue Asn174 is glycosylated (N-linked (GlcNAc...) asparagine). Residues Cys175 and Cys202 are joined by a disulfide bond. One can recognise a CUB 2 domain in the interval 175-290 (CSGDVFTALI…KGWKLRYHGD (116 aa)). 5 residues coordinate Ca(2+): Glu226, Asp236, Asp275, Gly278, and Gln279. Residues Cys234 and Cys251 are joined by a disulfide bond. 2 consecutive Sushi domains span residues 292–356 (IPCP…ECQP) and 357–423 (VDCG…KCIP). Cystine bridges form between Cys294/Cys341, Cys321/Cys354, Cys359/Cys403, Cys386/Cys421, Cys425/Cys549, Cys595/Cys618, and Cys627/Cys659. Asn406 is a glycosylation site (N-linked (GlcNAc...) asparagine). In terms of domain architecture, Peptidase S1 spans 438-680 (IFGGYSTKIQ…YVDWILKTMQ (243 aa)). Catalysis depends on charge relay system residues His475 and Asp529. Catalysis depends on Ser631, which acts as the Charge relay system.

The protein belongs to the peptidase S1 family. As to quaternary structure, core component of the complement C1 complex, a calcium-dependent complex composed of 1 molecule of the C1Q subcomplex, 2 molecules of C1R and 2 molecules of C1S. The C1Q subcomplex is composed 18 subunits: 3 chains of C1QA, C1QB, and C1QC trimerize to form 6 collagen-like triple helices connected to six globular ligand-recognition modules. In terms of processing, cleaved and activated by C1R to generate Complement C1s subcomponent heavy and light chains. The iron and 2-oxoglutarate dependent 3-hydroxylation of aspartate and asparagine is (R) stereospecific within EGF domains.

It is found in the secreted. It localises to the cell surface. The enzyme catalyses Cleavage of Arg-|-Ala bond in complement component C4 to form C4a and C4b, and Lys(or Arg)-|-Lys bond in complement component C2 to form C2a and C2b: the 'classical' pathway C3 convertase.. With respect to regulation, cleaved and activated by C1R. Immunoglobulin-binding promotes autoactivation of C1R, which results in the cleavage of the Arg-Ile bond in the catalytic domain. Inhibited by C1 inhibitor (SERPING1). Component of the complement C1 complex, a multiprotein complex that initiates the classical pathway of the complement system, a cascade of proteins that leads to phagocytosis and breakdown of pathogens and signaling that strengthens the adaptive immune system. C1S is activated following association of the C1 complex with immunoglobulins (IgG or IgM) complexed with antigens to form antigen-antibody complexes on the surface of pathogens. C1S is cleaved and activated by C1R to generate C1s subcomponent heavy and light chains. C1s subcomponent light chain then cleaves and activates C2 and C4, the next components of the classical complement pathway. Functionally, serine protease component of the complement C1 complex, which catalyzes cleavage and activation of C2 and C4, the next components of the classical complement pathway. Also cleaves IGFBP5 and thereby inhibits the trophic effects of IGF1. In Rattus norvegicus (Rat), this protein is Complement C1s subcomponent.